The primary structure comprises 309 residues: Ferrochelatase (309 aa).

Fe cation is bound by residues His185 and Glu262.

Belongs to the ferrochelatase family.

It localises to the cytoplasm. It catalyses the reaction heme b + 2 H(+) = protoporphyrin IX + Fe(2+). The protein operates within porphyrin-containing compound metabolism; protoheme biosynthesis; protoheme from protoporphyrin-IX: step 1/1. In terms of biological role, catalyzes the ferrous insertion into protoporphyrin IX. The chain is Ferrochelatase from Campylobacter jejuni subsp. jejuni serotype O:6 (strain 81116 / NCTC 11828).